The chain runs to 111 residues: WAP four-disulfide core domain protein 12 (111 aa).

The first 23 residues, 1-23 (MGSSSFLVLMVSLVLVTLVAVEG), serve as a signal peptide directing secretion. Positions 27–74 (GIEKAGVCPADNVRCFKSDPPQCHTDQDCLGERKCCYLHCGFKCVIPV) constitute a WAP domain. Cystine bridges form between C34–C62, C41–C66, C49–C61, and C55–C70. The disordered stretch occupies residues 80–111 (GGNKDEDVSRPYPEPGWEAKCPGSSSTRCPQK). Over residues 102 to 111 (GSSSTRCPQK) the composition is skewed to polar residues.

Highly expressed in prostate, skin, lung and esophagus. Weakly expressed in skeletal muscle, epididymis, kidney, trachea, salivary gland, testis and seminal vesicle.

Its subcellular location is the secreted. Antibacterial protein. Putative acid-stable proteinase inhibitor. The sequence is that of WAP four-disulfide core domain protein 12 (WFDC12) from Homo sapiens (Human).